The sequence spans 189 residues: Elongation factor P (189 aa).

The residue at position 34 (K34) is an N6-(3,6-diaminohexanoyl)-5-hydroxylysine.

It belongs to the elongation factor P family. May be beta-lysylated on the epsilon-amino group of Lys-34 by the combined action of EpmA and EpmB, and then hydroxylated on the C5 position of the same residue by EpmC (if this protein is present). Lysylation is critical for the stimulatory effect of EF-P on peptide-bond formation. The lysylation moiety may extend toward the peptidyltransferase center and stabilize the terminal 3-CCA end of the tRNA. Hydroxylation of the C5 position on Lys-34 may allow additional potential stabilizing hydrogen-bond interactions with the P-tRNA.

The protein resides in the cytoplasm. It functions in the pathway protein biosynthesis; polypeptide chain elongation. In terms of biological role, involved in peptide bond synthesis. Alleviates ribosome stalling that occurs when 3 or more consecutive Pro residues or the sequence PPG is present in a protein, possibly by augmenting the peptidyl transferase activity of the ribosome. Modification of Lys-34 is required for alleviation. In Baumannia cicadellinicola subsp. Homalodisca coagulata, this protein is Elongation factor P.